The primary structure comprises 196 residues: ECF RNA polymerase sigma factor SigM (196 aa).

The segment at 39–105 (LFRRHHRQLH…ACLDRLRRAK (67 aa)) is sigma-70 factor domain-2. Positions 63 to 66 (DALQ) match the Interaction with polymerase core subunit RpoC motif. The segment at 130–181 (AVQRALMRLPVEQRAAVVAVDMQGYSIADTARMLGVAEGTVKSRCARARARL) is sigma-70 factor domain-4. The segment at residues 156-175 (IADTARMLGVAEGTVKSRCA) is a DNA-binding region (H-T-H motif).

Belongs to the sigma-70 factor family. ECF subfamily. Interacts transiently with the RNA polymerase catalytic core formed by RpoA, RpoB, RpoC and RpoZ (2 alpha, 1 beta, 1 beta' and 1 omega subunit) to form the RNA polymerase holoenzyme that can initiate transcription. Interacts (via sigma-70 factor domain 4) with anti-sigma-M factor RsmA.

In terms of biological role, sigma factors are initiation factors that promote the attachment of RNA polymerase to specific initiation sites and are then released. Extracytoplasmic function (ECF) sigma factors are held in an inactive form by an anti-sigma factor until released by regulated intramembrane proteolysis. The chain is ECF RNA polymerase sigma factor SigM (sigM) from Mycobacterium tuberculosis (strain ATCC 35801 / TMC 107 / Erdman).